Consider the following 342-residue polypeptide: Replication factor C subunit 3 (342 aa).

63 to 70 contacts ATP; sequence GPPGTGKT.

This sequence belongs to the activator 1 small subunits family. In terms of assembly, heteropentamer of subunits rfc1, rfc2, rfc3, rfc4 and rfc5 that forms a complex (RFC) with PCNA in the presence of ATP. Two other complexes exist where rfc1 can be replaced by either ctf18 or elg1 to form the ctf18-RFC or the elg1-RFC complexes respectively.

The protein localises to the nucleus. Functionally, the elongation of primed DNA templates by DNA polymerase delta and epsilon requires the action of the accessory proteins PCNA and activator 1. Subunit 3 binds ATP. Also involved in replication and DNA damage checkpoint controls, probably functioning as a checkpoint sensor. In Schizosaccharomyces pombe (strain 972 / ATCC 24843) (Fission yeast), this protein is Replication factor C subunit 3 (rfc3).